We begin with the raw amino-acid sequence, 529 residues long: Peptide chain release factor 3 (529 aa).

The tr-type G domain occupies 11–280; it reads SKRRTFAIIS…GLTEWAPAPK (270 aa). GTP contacts are provided by residues 20–27, 88–92, and 142–145; these read SHPDAGKT, DTPGH, and NKLD.

It belongs to the TRAFAC class translation factor GTPase superfamily. Classic translation factor GTPase family. PrfC subfamily.

It is found in the cytoplasm. In terms of biological role, increases the formation of ribosomal termination complexes and stimulates activities of RF-1 and RF-2. It binds guanine nucleotides and has strong preference for UGA stop codons. It may interact directly with the ribosome. The stimulation of RF-1 and RF-2 is significantly reduced by GTP and GDP, but not by GMP. The protein is Peptide chain release factor 3 of Vibrio campbellii (strain ATCC BAA-1116).